A 446-amino-acid polypeptide reads, in one-letter code: Indoleacetamide hydrolase (446 aa).

Residues K71 and S146 each act as charge relay system in the active site. S170 serves as the catalytic Acyl-ester intermediate.

It belongs to the amidase family.

It participates in plant hormone metabolism; auxin biosynthesis. Functionally, hydrolyzes indole-3-acetamide (IAM) into indole-3-acetic acid (IAA). This chain is Indoleacetamide hydrolase (iaaH), found in Pseudomonas syringae pv. syringae.